A 305-amino-acid polypeptide reads, in one-letter code: Protoheme IX farnesyltransferase (305 aa).

A run of 9 helical transmembrane segments spans residues 31-51 (VMSL…YSVH), 52-72 (PFIA…AGAI), 96-118 (VIES…FFMA), 122-144 (NLLA…TIWL), 151-171 (NIVI…AAVS), 180-200 (ILFL…ALFC), 225-245 (ILIY…IGMN), 247-267 (FIYL…AGSL), and 281-301 (FAYS…TNTI).

It belongs to the UbiA prenyltransferase family. Protoheme IX farnesyltransferase subfamily.

The protein resides in the cell inner membrane. It catalyses the reaction heme b + (2E,6E)-farnesyl diphosphate + H2O = Fe(II)-heme o + diphosphate. It functions in the pathway porphyrin-containing compound metabolism; heme O biosynthesis; heme O from protoheme: step 1/1. Converts heme B (protoheme IX) to heme O by substitution of the vinyl group on carbon 2 of heme B porphyrin ring with a hydroxyethyl farnesyl side group. This Rickettsia peacockii (strain Rustic) protein is Protoheme IX farnesyltransferase.